The chain runs to 249 residues: Protein-lysine 6-oxidase (249 aa).

Sulfotyrosine is present on Tyr-19. The lysyl-oxidase like stretch occupies residues Pro-45–Tyr-249. Cystine bridges form between Cys-70/Cys-76, Cys-123/Cys-172, Cys-156/Cys-162, Cys-183/Cys-193, and Cys-230/Cys-244. Cu cation-binding residues include His-124, His-126, and His-128. Positions Lys-152 to Tyr-187 form a cross-link, lysine tyrosylquinone (Lys-Tyr). Tyr-187 bears the 2',4',5'-topaquinone mark.

It belongs to the lysyl oxidase family. Interacts with MFAP4. Interacts (via propeptide) with EFEMP2; this interaction is strong and facilitates formation of ternary complexes with ELN during elastic fiber assembly; this interaction limits interaction of EFEMP2 with FBLN5. Requires Cu cation as cofactor. It depends on lysine tyrosylquinone residue as a cofactor. The lysine tyrosylquinone cross-link (LTQ) is generated by condensation of the epsilon-amino group of a lysine with a topaquinone produced by oxidation of tyrosine. Post-translationally, proteolytically cleaved by BMP1 which removes the propeptide. Also proteolytically cleaved by ADAMTS2 and ADAMTS14, but not by ADAMTS3, at an additional cleavage site downstream of the BMP1 cleavage site. The propeptide plays a role in directing the deposition of this enzyme to elastic fibers, via interaction with tropoelastin. Cleavage by BMP1 to remove the propeptide does not increase enzymatic activity but increases binding to collagen. Cleavage by ADAMTS2 produces a form with reduced collagen-binding activity. In terms of processing, sulfated at Tyr-19 and also at either Tyr-15 or Tyr-16 which enhances binding to collagen.

The protein localises to the secreted. Its subcellular location is the extracellular space. It catalyses the reaction L-lysyl-[protein] + O2 + H2O = (S)-2-amino-6-oxohexanoyl-[protein] + H2O2 + NH4(+). Responsible for the post-translational oxidative deamination of peptidyl lysine residues in precursors to fibrous collagen and elastin. Regulator of Ras expression. May play a role in tumor suppression. Plays a role in the aortic wall architecture. The sequence is that of Protein-lysine 6-oxidase from Sus scrofa (Pig).